We begin with the raw amino-acid sequence, 952 residues long: Ubiquitin carboxyl-terminal hydrolase CYLD (952 aa).

Residues 106–589 (CEERLSLFRN…LEIMIGKKKG (484 aa)) form an interaction with TRIP region. CAP-Gly domains follow at residues 153–198 (LAER…VFVA) and 253–286 (DVLP…VQLC). Residues 311–350 (RRPPKLAFMSRGVGDKGSSSHNKPKVTGSTSDPGSRNRSE) form a disordered region. Residues 327-346 (GSSSHNKPKVTGSTSDPGSR) are compositionally biased toward polar residues. Residue Ser-383 is modified to Phosphoserine. Positions 386–409 (EMSSDFGHSSPPPQPPSMNSLSSE) are disordered. An interaction with TRAF2 region spans residues 390–465 (DFGHSSPPPQ…LPISSGNAHG (76 aa)). Phosphoserine occurs at positions 414 and 418. The interaction with IKBKG/NEMO stretch occupies residues 466–680 (LEVGSLAEVK…FTSEEKDPEE (215 aa)). The 44-residue stretch at 488 to 531 (GQPPGLSDVLAGLELEDECAGCTDGTFRGTRYFTCALKKALFVK) folds into the CAP-Gly 3 domain. The 359-residue stretch at 588 to 946 (KGIQGHYNSC…DAYMCMYQSP (359 aa)) folds into the USP domain. Cys-597 acts as the Nucleophile in catalysis. The tract at residues 777–829 (LEDTPRQCRICGGLAMYECRECYDDPDISAGKIKQFCKTCSTQVHLHPRRLNH) is B-box. Cys-784, Cys-787, Cys-795, Cys-798, Cys-813, Cys-816, His-821, and His-829 together coordinate Zn(2+). Catalysis depends on His-867, which acts as the Proton acceptor.

The protein belongs to the peptidase C19 family. Interacts (via CAP-Gly domain) with IKBKG/NEMO (via proline-rich C-terminal region). Interacts with TRAF2 and TRIP. Interacts with PLK1, DVL1, DVL3, MAVS, TBK1, IKKE and RIGI. Interacts (via CAP-Gly domain) with microtubules. Interacts with HDAC6 and BCL3. Interacts with MAP3K7. Identified in a complex with TRAF6 and SQSTM1. Interacts with OPTN and SQSTM1. Interacts with CEP350. Interacts with RNF31; the interaction is indirect and is mediated via SPATA2. Interacts with SPATA2 (via the PUB domain); the interaction is direct and recruits CYLD to the LUBAC complex, thereby regulating TNF-alpha-induced necroptosis. Post-translationally, phosphorylated on several serine residues by IKKA and/or IKKB in response to immune stimuli. Phosphorylation requires IKBKG. Phosphorylation abolishes TRAF2 deubiquitination, interferes with the activation of Jun kinases, and strongly reduces CD40-dependent gene activation by NF-kappa-B. In terms of processing, ubiquitinated. Polyubiquitinated in hepatocytes treated with palmitic acid. Ubiquitination is mediated by E3 ligase TRIM47 and leads to proteasomal degradation.

The protein resides in the cytoplasm. It localises to the perinuclear region. The protein localises to the cytoskeleton. Its subcellular location is the cell membrane. It is found in the microtubule organizing center. The protein resides in the centrosome. It localises to the spindle. The protein localises to the cilium basal body. The catalysed reaction is Thiol-dependent hydrolysis of ester, thioester, amide, peptide and isopeptide bonds formed by the C-terminal Gly of ubiquitin (a 76-residue protein attached to proteins as an intracellular targeting signal).. Deubiquitinase that specifically cleaves 'Lys-63'- and linear 'Met-1'-linked polyubiquitin chains and is involved in NF-kappa-B activation and TNF-alpha-induced necroptosis. Negatively regulates NF-kappa-B activation by deubiquitinating upstream signaling factors. Contributes to the regulation of cell survival, proliferation and differentiation via its effects on NF-kappa-B activation. Negative regulator of Wnt signaling. Inhibits HDAC6 and thereby promotes acetylation of alpha-tubulin and stabilization of microtubules. Plays a role in the regulation of microtubule dynamics, and thereby contributes to the regulation of cell proliferation, cell polarization, cell migration, and angiogenesis. Required for normal cell cycle progress and normal cytokinesis. Inhibits nuclear translocation of NF-kappa-B. Plays a role in the regulation of inflammation and the innate immune response, via its effects on NF-kappa-B activation. Dispensable for the maturation of intrathymic natural killer cells, but required for the continued survival of immature natural killer cells. Negatively regulates TNFRSF11A signaling and osteoclastogenesis. Involved in the regulation of ciliogenesis, allowing ciliary basal bodies to migrate and dock to the plasma membrane; this process does not depend on NF-kappa-B activation. Ability to remove linear ('Met-1'-linked) polyubiquitin chains regulates innate immunity and TNF-alpha-induced necroptosis: recruited to the LUBAC complex via interaction with SPATA2 and restricts linear polyubiquitin formation on target proteins. Regulates innate immunity by restricting linear polyubiquitin formation on RIPK2 in response to NOD2 stimulation. Involved in TNF-alpha-induced necroptosis by removing linear ('Met-1'-linked) polyubiquitin chains from RIPK1, thereby regulating the kinase activity of RIPK1. Negatively regulates intestinal inflammation by removing 'Lys-63' linked polyubiquitin chain of NLRP6, thereby reducing the interaction between NLRP6 and PYCARD/ASC and formation of the NLRP6 inflammasome. Does not catalyze deubiquitination of heterotypic 'Lys-63'-/'Lys-48'-linked branched ubiquitin chains. Removes 'Lys-63' linked polyubiquitin chain of MAP3K7, which inhibits phosphorylation and blocks downstream activation of the JNK-p38 kinase cascades. Also removes 'Lys-63'-linked polyubiquitin chains of MAP3K1 and MA3P3K3, which inhibit their interaction with MAP2K1 and MAP2K2. This is Ubiquitin carboxyl-terminal hydrolase CYLD (Cyld) from Mus musculus (Mouse).